A 227-amino-acid polypeptide reads, in one-letter code: Cytochrome c oxidase subunit 2 (227 aa).

At 1–14 (MAYPFQLGFQDATS) the chain is on the mitochondrial intermembrane side. The chain crosses the membrane as a helical span at residues 15-45 (PIMEELLHFHDHTLMIVFLISSLVLYIISSM). The Mitochondrial matrix segment spans residues 46 to 59 (LTTKLTHTSTMDAQ). Residues 60-87 (EVETIWTILPAIILILIALPSLRILYMM) traverse the membrane as a helical segment. Residues 88–227 (DEINNPSLTV…HFEEWSASML (140 aa)) are Mitochondrial intermembrane-facing. Residues His-161, Cys-196, Glu-198, Cys-200, His-204, and Met-207 each contribute to the Cu cation site. Residue Glu-198 participates in Mg(2+) binding.

This sequence belongs to the cytochrome c oxidase subunit 2 family. In terms of assembly, component of the cytochrome c oxidase (complex IV, CIV), a multisubunit enzyme composed of 14 subunits. The complex is composed of a catalytic core of 3 subunits MT-CO1, MT-CO2 and MT-CO3, encoded in the mitochondrial DNA, and 11 supernumerary subunits COX4I, COX5A, COX5B, COX6A, COX6B, COX6C, COX7A, COX7B, COX7C, COX8 and NDUFA4, which are encoded in the nuclear genome. The complex exists as a monomer or a dimer and forms supercomplexes (SCs) in the inner mitochondrial membrane with NADH-ubiquinone oxidoreductase (complex I, CI) and ubiquinol-cytochrome c oxidoreductase (cytochrome b-c1 complex, complex III, CIII), resulting in different assemblies (supercomplex SCI(1)III(2)IV(1) and megacomplex MCI(2)III(2)IV(2)). Found in a complex with TMEM177, COA6, COX18, COX20, SCO1 and SCO2. Interacts with TMEM177 in a COX20-dependent manner. Interacts with COX20. Interacts with COX16. Cu cation is required as a cofactor.

It is found in the mitochondrion inner membrane. The enzyme catalyses 4 Fe(II)-[cytochrome c] + O2 + 8 H(+)(in) = 4 Fe(III)-[cytochrome c] + 2 H2O + 4 H(+)(out). Functionally, component of the cytochrome c oxidase, the last enzyme in the mitochondrial electron transport chain which drives oxidative phosphorylation. The respiratory chain contains 3 multisubunit complexes succinate dehydrogenase (complex II, CII), ubiquinol-cytochrome c oxidoreductase (cytochrome b-c1 complex, complex III, CIII) and cytochrome c oxidase (complex IV, CIV), that cooperate to transfer electrons derived from NADH and succinate to molecular oxygen, creating an electrochemical gradient over the inner membrane that drives transmembrane transport and the ATP synthase. Cytochrome c oxidase is the component of the respiratory chain that catalyzes the reduction of oxygen to water. Electrons originating from reduced cytochrome c in the intermembrane space (IMS) are transferred via the dinuclear copper A center (CU(A)) of subunit 2 and heme A of subunit 1 to the active site in subunit 1, a binuclear center (BNC) formed by heme A3 and copper B (CU(B)). The BNC reduces molecular oxygen to 2 water molecules using 4 electrons from cytochrome c in the IMS and 4 protons from the mitochondrial matrix. This is Cytochrome c oxidase subunit 2 (MT-CO2) from Equus caballus (Horse).